Consider the following 447-residue polypeptide: tRNA-2-methylthio-N(6)-dimethylallyladenosine synthase (447 aa).

An MTTase N-terminal domain is found at 14–130 (KKVYIRTFGC…LPAMIANAGQ (117 aa)). Positions 23, 59, 93, 166, 170, and 173 each coordinate [4Fe-4S] cluster. A Radical SAM core domain is found at 152 to 382 (RSGTISAFIP…IALQGSISGE (231 aa)). A TRAM domain is found at 385–447 (AAEVGAVVEV…TPATLIGTPA (63 aa)).

This sequence belongs to the methylthiotransferase family. MiaB subfamily. In terms of assembly, monomer. Requires [4Fe-4S] cluster as cofactor.

The protein resides in the cytoplasm. It carries out the reaction N(6)-dimethylallyladenosine(37) in tRNA + (sulfur carrier)-SH + AH2 + 2 S-adenosyl-L-methionine = 2-methylsulfanyl-N(6)-dimethylallyladenosine(37) in tRNA + (sulfur carrier)-H + 5'-deoxyadenosine + L-methionine + A + S-adenosyl-L-homocysteine + 2 H(+). Its function is as follows. Catalyzes the methylthiolation of N6-(dimethylallyl)adenosine (i(6)A), leading to the formation of 2-methylthio-N6-(dimethylallyl)adenosine (ms(2)i(6)A) at position 37 in tRNAs that read codons beginning with uridine. The sequence is that of tRNA-2-methylthio-N(6)-dimethylallyladenosine synthase from Chlorobium phaeobacteroides (strain BS1).